Here is a 181-residue protein sequence, read N- to C-terminus: uncharacterized protein (181 aa).

Belongs to the M.jannaschii MJ0150/MJ0739/MJ0745/MJ1460/MJ1642 family.

This is an uncharacterized protein from Methanocaldococcus jannaschii (strain ATCC 43067 / DSM 2661 / JAL-1 / JCM 10045 / NBRC 100440) (Methanococcus jannaschii).